We begin with the raw amino-acid sequence, 161 residues long: Cyclic pyranopterin monophosphate synthase (161 aa).

Substrate-binding positions include 75–77 (LCH) and 113–114 (ME). The active site involves aspartate 128.

This sequence belongs to the MoaC family. In terms of assembly, homohexamer; trimer of dimers.

The catalysed reaction is (8S)-3',8-cyclo-7,8-dihydroguanosine 5'-triphosphate = cyclic pyranopterin phosphate + diphosphate. The protein operates within cofactor biosynthesis; molybdopterin biosynthesis. Catalyzes the conversion of (8S)-3',8-cyclo-7,8-dihydroguanosine 5'-triphosphate to cyclic pyranopterin monophosphate (cPMP). In Salmonella arizonae (strain ATCC BAA-731 / CDC346-86 / RSK2980), this protein is Cyclic pyranopterin monophosphate synthase.